The primary structure comprises 159 residues: MVPATGQLALLALGILLAVCQALENSTSPLSDSPVAAAVVSHFNKCPDSHTQYCFHGTCRFLVQEEKPACVCHSGYVGVRCEHADLLAVVAASQKKQAITALVVVSIVALAVLIITCVLIHCCQLRKHCEWCRALVCRHEKPSALLKGRTACCHSETVV.

Positions 1 to 23 (MVPATGQLALLALGILLAVCQAL) are cleaved as a signal peptide. Positions 24–38 (ENSTSPLSDSPVAAA) are cleaved as a propeptide — removed in mature form. At 24 to 97 (ENSTSPLSDS…AVVAASQKKQ (74 aa)) the chain is on the extracellular side. N-linked (GlcNAc...) asparagine glycosylation occurs at Asn-25. The 40-residue stretch at 44-83 (NKCPDSHTQYCFHGTCRFLVQEEKPACVCHSGYVGVRCEH) folds into the EGF-like domain. 3 disulfides stabilise this stretch: Cys-46-Cys-59, Cys-54-Cys-70, and Cys-72-Cys-81. Positions 89–159 (VVAASQKKQA…TACCHSETVV (71 aa)) are cleaved as a propeptide — removed in mature form. A helical membrane pass occupies residues 98–123 (AITALVVVSIVALAVLIITCVLIHCC). Topologically, residues 124–159 (QLRKHCEWCRALVCRHEKPSALLKGRTACCHSETVV) are cytoplasmic. Residues Cys-152 and Cys-153 are each lipidated (S-palmitoyl cysteine).

In terms of assembly, interacts with the PDZ domains of SDCBP and SNTA1. The interaction with SDCBP, is required for the targeting to the cell surface. In the endoplasmic reticulum, in its immature form (i.e. with a prosegment and lacking full N-glycosylation), interacts with CNIH. In the Golgi apparatus, may form a complex with CNIH and GORASP2. Interacts (via cytoplasmic C-terminal domain) with NKD2. Interacts with MAGI3.

Its subcellular location is the secreted. It localises to the extracellular space. The protein localises to the cell membrane. Its function is as follows. TGF alpha is a mitogenic polypeptide that is able to bind to the EGF receptor/EGFR and to act synergistically with TGF beta to promote anchorage-independent cell proliferation in soft agar. This is Protransforming growth factor alpha (Tgfa) from Mus musculus (Mouse).